A 74-amino-acid polypeptide reads, in one-letter code: Conotoxin MiEr93 (74 aa).

An N-terminal signal peptide occupies residues 1 to 22; sequence MKLTCVLIIAVLFLTAYQLATA. The propeptide occupies 23 to 45; it reads ASYAKGKQKHRALRPADKHLRLT. Intrachain disulfides connect cysteine 48-cysteine 62, cysteine 55-cysteine 66, and cysteine 61-cysteine 73.

The protein belongs to the conotoxin O1 superfamily. As to expression, expressed by the venom duct.

The protein resides in the secreted. In Conus miles (Soldier cone), this protein is Conotoxin MiEr93.